The chain runs to 351 residues: Adenine deaminase (351 aa).

3 residues coordinate Zn(2+): H20, H22, and H200. The active-site Proton donor is E203. D281 contributes to the Zn(2+) binding site. Residue D282 participates in substrate binding.

It belongs to the metallo-dependent hydrolases superfamily. Adenosine and AMP deaminases family. Adenine deaminase type 2 subfamily. It depends on Zn(2+) as a cofactor.

It carries out the reaction adenine + H2O + H(+) = hypoxanthine + NH4(+). Catalyzes the hydrolytic deamination of adenine to hypoxanthine. Plays an important role in the purine salvage pathway and in nitrogen catabolism. The protein is Adenine deaminase of Cupriavidus necator (strain ATCC 17699 / DSM 428 / KCTC 22496 / NCIMB 10442 / H16 / Stanier 337) (Ralstonia eutropha).